Reading from the N-terminus, the 398-residue chain is tRNA-specific 2-thiouridylase MnmA (398 aa).

ATP is bound by residues 19–26 (AMSGGVDS) and Leu45. Residue Cys113 is the Nucleophile of the active site. A disulfide bridge links Cys113 with Cys210. Gly137 is a binding site for ATP. An interaction with tRNA region spans residues 160-162 (RDQ). Cys210 acts as the Cysteine persulfide intermediate in catalysis.

This sequence belongs to the MnmA/TRMU family.

The protein localises to the cytoplasm. The catalysed reaction is S-sulfanyl-L-cysteinyl-[protein] + uridine(34) in tRNA + AH2 + ATP = 2-thiouridine(34) in tRNA + L-cysteinyl-[protein] + A + AMP + diphosphate + H(+). In terms of biological role, catalyzes the 2-thiolation of uridine at the wobble position (U34) of tRNA, leading to the formation of s(2)U34. The chain is tRNA-specific 2-thiouridylase MnmA from Rhodopseudomonas palustris (strain HaA2).